The following is a 1079-amino-acid chain: Error-prone DNA polymerase (1079 aa).

This sequence belongs to the DNA polymerase type-C family. DnaE2 subfamily.

It localises to the cytoplasm. The catalysed reaction is DNA(n) + a 2'-deoxyribonucleoside 5'-triphosphate = DNA(n+1) + diphosphate. Functionally, DNA polymerase involved in damage-induced mutagenesis and translesion synthesis (TLS). It is not the major replicative DNA polymerase. The sequence is that of Error-prone DNA polymerase from Ralstonia pickettii (strain 12J).